The sequence spans 209 residues: MGSRAICIQRVAPPCFEASQVKKIKTVGSFLVNTRSKRRRSTGVKCSSIADYIGGDLVKPDIGQWLQDVEEHKAIAIYAPHEGGYEGRYLNRLKMQGYYFLDISARGLGDPETTLLKNYPVCPAHLGKQPIARWYYPPEVDYRLAALPPSAKGLVVWVLEAKVLSKSELQFLALLPSLRPNVRVIAECGNWRKFVWKPLAEIANLAAQE.

A chloroplast-targeting transit peptide spans 1-45 (MGSRAICIQRVAPPCFEASQVKKIKTVGSFLVNTRSKRRRSTGVK).

Belongs to the NDH complex subunit N family. As to quaternary structure, part of the chloroplast NDH complex, composed of a mixture of chloroplast and nucleus encoded subunits. Component of the NDH subcomplex A, at least composed of ndhH, ndhI, ndhJ, ndhK, ndhL, ndhM, ndhN and ndhO.

Its subcellular location is the plastid. The protein resides in the chloroplast thylakoid membrane. The enzyme catalyses a plastoquinone + NADH + (n+1) H(+)(in) = a plastoquinol + NAD(+) + n H(+)(out). It catalyses the reaction a plastoquinone + NADPH + (n+1) H(+)(in) = a plastoquinol + NADP(+) + n H(+)(out). Its function is as follows. NDH shuttles electrons from NAD(P)H:plastoquinone, via FMN and iron-sulfur (Fe-S) centers, to quinones in the photosynthetic chain and possibly in a chloroplast respiratory chain. The immediate electron acceptor for the enzyme in this species is believed to be plastoquinone. Couples the redox reaction to proton translocation, and thus conserves the redox energy in a proton gradient. The protein is NAD(P)H-quinone oxidoreductase subunit N, chloroplastic of Arabidopsis thaliana (Mouse-ear cress).